Consider the following 165-residue polypeptide: Adenosine 5'-monophosphoramidase HINT3 (165 aa).

The interval methionine 1–glutamate 23 is disordered. Alanine 2 is modified (N-acetylalanine). Residues valine 32–lysine 143 form the HIT domain. AMP is bound by residues aspartate 59–isoleucine 60 and histidine 128–histidine 130. The Histidine triad motif signature appears at histidine 126 to histidine 130. The active-site Tele-AMP-histidine intermediate is histidine 128.

The protein belongs to the HINT family. In terms of assembly, forms dimers to octamers and even larger oligomer. Interacts with CALM1.

Its subcellular location is the cytoplasm. The protein resides in the nucleus. It carries out the reaction adenosine 5'-phosphoramidate + H2O = AMP + NH4(+). Exhibits adenosine 5'-monophosphoramidase activity, hydrolyzing purine nucleotide phosphoramidates with a single phosphate group such as adenosine 5'monophosphoramidate (AMP-NH2) to yield AMP and NH2. Hydrolyzes lysyl-AMP (AMP-N-epsilon-(N-alpha-acetyl lysine methyl ester)) generated by lysine tRNA ligase. The sequence is that of Adenosine 5'-monophosphoramidase HINT3 (Hint3) from Mus musculus (Mouse).